Here is a 155-residue protein sequence, read N- to C-terminus: Endoribonuclease YbeY (155 aa).

Residues His119, His123, and His129 each coordinate Zn(2+).

The protein belongs to the endoribonuclease YbeY family. Zn(2+) is required as a cofactor.

The protein resides in the cytoplasm. Single strand-specific metallo-endoribonuclease involved in late-stage 70S ribosome quality control and in maturation of the 3' terminus of the 16S rRNA. This is Endoribonuclease YbeY from Mycoplasmopsis synoviae (strain 53) (Mycoplasma synoviae).